The chain runs to 147 residues: Globin (147 aa).

A Globin domain is found at 1–147 (GLSAEQKTAL…LLGVLIENHQ (147 aa)). Residues His66 and His98 each contribute to the heme b site.

Belongs to the globin family. In terms of assembly, homodimer.

In Tritia mutabilis (Sea snail), this protein is Globin.